A 420-amino-acid polypeptide reads, in one-letter code: Gamma-glutamyl phosphate reductase (420 aa).

It belongs to the gamma-glutamyl phosphate reductase family.

The protein localises to the cytoplasm. It carries out the reaction L-glutamate 5-semialdehyde + phosphate + NADP(+) = L-glutamyl 5-phosphate + NADPH + H(+). Its pathway is amino-acid biosynthesis; L-proline biosynthesis; L-glutamate 5-semialdehyde from L-glutamate: step 2/2. In terms of biological role, catalyzes the NADPH-dependent reduction of L-glutamate 5-phosphate into L-glutamate 5-semialdehyde and phosphate. The product spontaneously undergoes cyclization to form 1-pyrroline-5-carboxylate. This is Gamma-glutamyl phosphate reductase from Laribacter hongkongensis (strain HLHK9).